A 518-amino-acid polypeptide reads, in one-letter code: UPF0288 protein Mbar_A0706 (518 aa).

Belongs to the UPF0288 family.

The sequence is that of UPF0288 protein Mbar_A0706 from Methanosarcina barkeri (strain Fusaro / DSM 804).